The primary structure comprises 457 residues: Exodeoxyribonuclease 7 large subunit (457 aa).

It belongs to the XseA family. As to quaternary structure, heterooligomer composed of large and small subunits.

Its subcellular location is the cytoplasm. It carries out the reaction Exonucleolytic cleavage in either 5'- to 3'- or 3'- to 5'-direction to yield nucleoside 5'-phosphates.. Functionally, bidirectionally degrades single-stranded DNA into large acid-insoluble oligonucleotides, which are then degraded further into small acid-soluble oligonucleotides. This is Exodeoxyribonuclease 7 large subunit from Photorhabdus laumondii subsp. laumondii (strain DSM 15139 / CIP 105565 / TT01) (Photorhabdus luminescens subsp. laumondii).